A 183-amino-acid polypeptide reads, in one-letter code: Inner membrane-spanning protein YciB (183 aa).

The next 5 helical transmembrane spans lie at 4-24 (FIEF…DIYM), 50-70 (MQLF…FFHD), 72-92 (TFIK…LLIS), 119-139 (VNLG…YVAF), and 149-169 (FKVF…GVYL).

This sequence belongs to the YciB family.

It is found in the cell inner membrane. Functionally, plays a role in cell envelope biogenesis, maintenance of cell envelope integrity and membrane homeostasis. In Aeromonas hydrophila subsp. hydrophila (strain ATCC 7966 / DSM 30187 / BCRC 13018 / CCUG 14551 / JCM 1027 / KCTC 2358 / NCIMB 9240 / NCTC 8049), this protein is Inner membrane-spanning protein YciB.